A 583-amino-acid polypeptide reads, in one-letter code: Secretogranin-2b (583 aa).

Positions 1 to 28 (MMLSLPKLSAGGVVVLLATLLHTLTVQG) are cleaved as a signal peptide. Disordered stretches follow at residues 123-159 (AGES…AGFV) and 526-583 (VDNG…VAGM). Residues 534 to 546 (AKRDTQGKEEPEG) are compositionally biased toward basic and acidic residues.

This sequence belongs to the chromogranin/secretogranin protein family.

The protein localises to the secreted. Functionally, neuroendocrine protein of the granin family that regulates the biogenesis of secretory granules. Required for neurovascular modeling of the hindbrain. Acts in a non-cell autonomous manner and is required for migration and proliferation of central artery endothelial cells. Required for normal courting behavior and spawning. This Danio rerio (Zebrafish) protein is Secretogranin-2b.